Consider the following 239-residue polypeptide: uncharacterized protein (239 aa).

Residues 193-214 (RKRKLNLSDGENKAKSPYSSIS) form a disordered region.

The protein resides in the nucleus. This is an uncharacterized protein from Schizosaccharomyces pombe (strain 972 / ATCC 24843) (Fission yeast).